Consider the following 91-residue polypeptide: MSFDRSRIPTWRQGYRYQYEPAQKGHVLLYPEGMIKLNDSAALIGGLIDGERDVAAIIAELDKQFPGVPELGEDIEQFMEVARAEHWITLA.

Belongs to the PqqD family. Monomer. Interacts with PqqE.

Its pathway is cofactor biosynthesis; pyrroloquinoline quinone biosynthesis. Functions as a PqqA binding protein and presents PqqA to PqqE, in the pyrroloquinoline quinone (PQQ) biosynthetic pathway. The protein is PqqA binding protein of Pseudomonas fluorescens (strain SBW25).